The following is a 302-amino-acid chain: Glycine--tRNA ligase alpha subunit (302 aa).

The protein belongs to the class-II aminoacyl-tRNA synthetase family. As to quaternary structure, tetramer of two alpha and two beta subunits.

It is found in the cytoplasm. It catalyses the reaction tRNA(Gly) + glycine + ATP = glycyl-tRNA(Gly) + AMP + diphosphate. The polypeptide is Glycine--tRNA ligase alpha subunit (Xanthomonas campestris pv. campestris (strain 8004)).